The primary structure comprises 336 residues: Fructose-1,6-bisphosphatase class 1 (336 aa).

Residues Glu92, Asp115, Leu117, and Asp118 each coordinate Mg(2+). Substrate is bound by residues 118–121 (DGSS), Asn211, Tyr244, 262–264 (YLY), and Lys274. Mg(2+) is bound at residue Glu280.

This sequence belongs to the FBPase class 1 family. As to quaternary structure, homotetramer. Requires Mg(2+) as cofactor.

The protein resides in the cytoplasm. It catalyses the reaction beta-D-fructose 1,6-bisphosphate + H2O = beta-D-fructose 6-phosphate + phosphate. It participates in carbohydrate biosynthesis; gluconeogenesis. The chain is Fructose-1,6-bisphosphatase class 1 from Vibrio atlanticus (strain LGP32) (Vibrio splendidus (strain Mel32)).